Consider the following 218-residue polypeptide: Tubulin polymerization-promoting protein (218 aa).

The segment at M1 to E46 is disordered. Residues M1 to F115 form a mediates interaction with LIMK1 region. Residue T15 is modified to Phosphothreonine. Phosphoserine is present on residues S19, S31, and S34. T42 carries the phosphothreonine modification. Positions 60, 71, 79, and 82 each coordinate Zn(2+). T91 is subject to Phosphothreonine. S106 is subject to Phosphoserine. O-linked (GlcNAc) serine glycosylation is present at S151. Phosphoserine is present on residues S158 and S159. The tract at residues T166–V192 is disordered. The span at S174–G183 shows a compositional bias: basic and acidic residues.

This sequence belongs to the TPPP family. As to quaternary structure, homodimer. Binds tubulin; binding is inhibited by GTP. Interacts with MAPK1. Interacts with GAPDH; the interaction is direct. Interacts with LIMK1 (via the PDZ domain); the interaction is direct. Interacts with LIMK2. Interacts with HDAC6; thereby inhibiting the tubulin deacetylase activity of HDAC6. Interacts with aggregated SNCA; may have a pro-aggregatory role in synucleinopathies. Interacts with DYNLL1. Interacts (via C-terminus) with S100A2, S100A6 and S100B; these interactions inhibit TPPP dimerization. Mg(2+) serves as cofactor. Phosphorylated by LIMK1 on serine residues; phosphorylation may alter the tubulin polymerization activity. Phosphorylation by LIMK2, but not LIMK1, regulates astral microtubule organization at early stage of mitosis. Phosphorylation by ROCK1 at Ser-31, Ser-106 and Ser-158 inhibits interaction with HDAC6, resulting in decreased acetylation of tubulin, increased cell motility and entry into S-phase. Phosphorylation by CDK1 inhibits the microtubule polymerizing activity. In terms of processing, degraded by the proteasome; zinc-binding inhibits degradation by the proteasome. As to expression, widely expressed with higher expression in brain (at protein level).

It localises to the golgi outpost. The protein resides in the cytoplasm. The protein localises to the cytoskeleton. Its subcellular location is the microtubule organizing center. It is found in the nucleus. It localises to the spindle. The enzyme catalyses GTP + H2O = GDP + phosphate + H(+). Regulator of microtubule dynamics that plays a key role in myelination by promoting elongation of the myelin sheath. Acts as a microtubule nucleation factor in oligodendrocytes: specifically localizes to the postsynaptic Golgi apparatus region, also named Golgi outpost, and promotes microtubule nucleation, an important step for elongation of the myelin sheath. Required for both uniform polarized growth of distal microtubules as well as directing the branching of proximal processes. Shows magnesium-dependent GTPase activity; the role of the GTPase activity is unclear. In addition to microtubule nucleation activity, also involved in microtubule bundling and stabilization of existing microtubules, thereby maintaining the integrity of the microtubule network. Regulates microtubule dynamics by promoting tubulin acetylation: acts by inhibiting the tubulin deacetylase activity of HDAC6. Also regulates cell migration: phosphorylation by ROCK1 inhibits interaction with HDAC6, resulting in decreased acetylation of tubulin and increased cell motility. Plays a role in cell proliferation by regulating the G1/S-phase transition. Involved in astral microtubule organization and mitotic spindle orientation during early stage of mitosis; this process is regulated by phosphorylation by LIMK2. The chain is Tubulin polymerization-promoting protein from Mus musculus (Mouse).